The primary structure comprises 303 residues: Diaminopimelate epimerase (303 aa).

The substrate site is built by asparagine 15, glutamine 47, and asparagine 67. Cysteine 76 (proton donor) is an active-site residue. Substrate contacts are provided by residues 77–78, asparagine 163, asparagine 197, and 215–216; these read GN and ER. The Proton acceptor role is filled by cysteine 224. 225–226 contacts substrate; it reads GS. The segment at 279–303 is disordered; it reads DPATGEWSRDTQGLQGSGNADRGTA.

It belongs to the diaminopimelate epimerase family. Homodimer.

It is found in the cytoplasm. It catalyses the reaction (2S,6S)-2,6-diaminopimelate = meso-2,6-diaminopimelate. It functions in the pathway amino-acid biosynthesis; L-lysine biosynthesis via DAP pathway; DL-2,6-diaminopimelate from LL-2,6-diaminopimelate: step 1/1. Catalyzes the stereoinversion of LL-2,6-diaminopimelate (L,L-DAP) to meso-diaminopimelate (meso-DAP), a precursor of L-lysine and an essential component of the bacterial peptidoglycan. The sequence is that of Diaminopimelate epimerase from Brucella canis (strain ATCC 23365 / NCTC 10854 / RM-666).